The sequence spans 145 residues: Probable D-aminoacyl-tRNA deacylase (145 aa).

Belongs to the DTD family. As to quaternary structure, homodimer.

It localises to the cytoplasm. The enzyme catalyses glycyl-tRNA(Ala) + H2O = tRNA(Ala) + glycine + H(+). The catalysed reaction is a D-aminoacyl-tRNA + H2O = a tRNA + a D-alpha-amino acid + H(+). An aminoacyl-tRNA editing enzyme that deacylates mischarged D-aminoacyl-tRNAs. Also deacylates mischarged glycyl-tRNA(Ala), protecting cells against glycine mischarging by AlaRS. Acts via tRNA-based rather than protein-based catalysis; rejects L-amino acids rather than detecting D-amino acids in the active site. By recycling D-aminoacyl-tRNA to D-amino acids and free tRNA molecules, this enzyme counteracts the toxicity associated with the formation of D-aminoacyl-tRNA entities in vivo and helps enforce protein L-homochirality. This Shigella flexneri serotype 5b (strain 8401) protein is Probable D-aminoacyl-tRNA deacylase.